The following is a 2545-amino-acid chain: uncharacterized protein (2545 aa).

Residues 17 to 37 (INFSITFIFINILLVFFSTFL) traverse the membrane as a helical segment. Residues 131 to 161 (LENIKQELHIIDRELKNILQKEENLQLINEE) adopt a coiled-coil conformation. Disordered stretches follow at residues 348 to 462 (NVNQ…PKKT), 587 to 616 (NHNM…SNDI), and 1214 to 1238 (RNSS…ENRR). Composition is skewed to basic and acidic residues over residues 354 to 371 (SSDH…KNDQ), 380 to 391 (KNEKNEENEKNG), and 401 to 413 (QNGK…KNEQ). The segment covering 414–435 (NEQNDQIEQNYQNDPNDQNDQN) has biased composition (low complexity). Basic and acidic residues-rich tracts occupy residues 437 to 454 (QNEK…KKNE) and 590 to 599 (MQRENTREDP). A compositionally biased stretch (polar residues) spans 600–613 (SNNMDYTNKSTSDS). Positions 1219 to 1238 (NKKERDSKKDRDSVYDENRR) are enriched in basic and acidic residues. The stretch at 2303 to 2337 (KEKYKFQMNMKDSEINQLQNNLIDEFKELNEVSKL) forms a coiled coil.

The protein resides in the membrane. This is an uncharacterized protein from Plasmodium falciparum (isolate 3D7).